Reading from the N-terminus, the 145-residue chain is MVGRNSAIAAGVCGALFIGYCIYFDRKRRSDPNFKNRLRERRKKQKLAKERAGLSKLPDLKDAEAVQKFFLEEIQLGEELLAQGDYEKGVDHLTNAIAVCGQPQQLLQVLQQTLPPPVFQMLLTKLPTISQRIVSAQSLAEDDVE.

At 1 to 6 (MVGRNS) the chain is on the mitochondrial intermembrane side. Residues 7–24 (AIAAGVCGALFIGYCIYF) form a helical membrane-spanning segment. The Cytoplasmic segment spans residues 25–145 (DRKRRSDPNF…AQSLAEDDVE (121 aa)). Glycyl lysine isopeptide (Lys-Gly) (interchain with G-Cter in ubiquitin) cross-links involve residues lysine 35, lysine 56, lysine 61, and lysine 68. Phosphoserine occurs at positions 135 and 138.

This sequence belongs to the Tom20 family. In terms of assembly, forms part of the preprotein translocase complex of the outer mitochondrial membrane (TOM complex) which consists of at least 7 different proteins (TOMM5, TOMM6, TOMM7, TOMM20, TOMM22, TOMM40 and TOMM70). Interacts with TOM22. Interacts with APEX1. Interacts with TBC1D21. Upon mitochondrial depolarization, interacts with PINK1; the interaction is required for PINK1-TOM-TIM23 supercomplex formation which is critical for PINK1 stabilization at the outer mitochondrial membrane, kinase activation and downstream mitophagy. In terms of processing, ubiquitinated by PRKN during mitophagy, leading to its degradation and enhancement of mitophagy. Deubiquitinated by USP30. In terms of tissue distribution, expressed in brain, kidney, stomach, colon, jejunum, ileum, testis, ovary and oviduct (at protein level). In the brain, expressed in neural cells of the cerebrum and cerebellum (at protein level). In the kidney, expressed in the proximal to distal tubule in the cortex and the outer and inner zones of the medulla (at protein level). In the stomach, expressed in the basal layer of stratified squamous epithelia in the forestomach and in the gastric pit and fundic gland of the glandular stomach (at protein level). Expressed in epithelial cells of the jejunum, ileum, and colon (at protein level). In the testis, expressed by spermatocytes and spermatogonia (at protein level). In the ovaries, expressed by follicular epithelial cells and corpus luteum cells (at protein level). In the oviduct, expressed in the epithelia of the isthmus and the ciliated cells of the ampulla (at protein level). Expressed in the sperm midpiece (at protein level).

It is found in the mitochondrion outer membrane. Central component of the receptor complex responsible for the recognition and translocation of cytosolically synthesized mitochondrial preproteins. Together with TOM22 functions as the transit peptide receptor at the surface of the mitochondrion outer membrane and facilitates the movement of preproteins into the TOM40 translocation pore. Required for the translocation across the mitochondrial outer membrane of cytochrome P450 monooxygenases. The protein is Mitochondrial import receptor subunit TOM20 homolog (Tomm20) of Mus musculus (Mouse).